We begin with the raw amino-acid sequence, 965 residues long: Iron-responsive element-binding protein 2 (965 aa).

The interval 142–170 (NAPNPGGGEAQKPTAKLSPLKGQPRKLPC) is disordered. Cys-514, Cys-580, and Cys-583 together coordinate [4Fe-4S] cluster.

Belongs to the aconitase/IPM isomerase family. The cofactor is [4Fe-4S] cluster. In terms of processing, ubiquitinated and degraded by the proteasome in presence of high level of iron and oxygen.

The protein resides in the cytoplasm. RNA-binding protein that binds to iron-responsive elements (IRES), which are stem-loop structures found in the 5'-UTR of ferritin, and delta aminolevulinic acid synthase mRNAs, and in the 3'-UTR of transferrin receptor mRNA. Binding to the IRE element in ferritin results in the repression of its mRNA translation. Binding of the protein to the transferrin receptor mRNA inhibits the degradation of this otherwise rapidly degraded mRNA. This chain is Iron-responsive element-binding protein 2 (IREB2), found in Gallus gallus (Chicken).